The chain runs to 125 residues: Allatostatin (125 aa).

The N-terminal stretch at Met-1–Ala-26 is a signal peptide. The propeptide occupies Ala-27–Asp-106. At Gln-109 the chain carries Pyrrolidone carboxylic acid.

The protein belongs to the allatostatin family.

The protein resides in the secreted. Functionally, strongly inhibits juvenile hormone biosynthesis in vitro by the corpora allata from fifth-stadium larvae and adult females. This is Allatostatin from Spodoptera frugiperda (Fall armyworm).